Consider the following 466-residue polypeptide: Argininosuccinate lyase (466 aa).

It belongs to the lyase 1 family. Argininosuccinate lyase subfamily.

The protein localises to the cytoplasm. It catalyses the reaction 2-(N(omega)-L-arginino)succinate = fumarate + L-arginine. It functions in the pathway amino-acid biosynthesis; L-arginine biosynthesis; L-arginine from L-ornithine and carbamoyl phosphate: step 3/3. The polypeptide is Argininosuccinate lyase (Bartonella bacilliformis (strain ATCC 35685 / KC583 / Herrer 020/F12,63)).